Here is a 169-residue protein sequence, read N- to C-terminus: Sec-independent protein translocase protein TatB (169 aa).

Residues 1-21 (MFDIGFLELAVIAVIGLIVIG) form a helical membrane-spanning segment. Residues 98 to 169 (EAEEAKLQTP…TTKTEPANDR (72 aa)) form a disordered region. The segment covering 134–143 (PPEEPSKVEA) has biased composition (basic and acidic residues). Residues 146 to 169 (SAETPQANNQDQQPTTKTEPANDR) show a composition bias toward polar residues.

Belongs to the TatB family. The Tat system comprises two distinct complexes: a TatABC complex, containing multiple copies of TatA, TatB and TatC subunits, and a separate TatA complex, containing only TatA subunits. Substrates initially bind to the TatABC complex, which probably triggers association of the separate TatA complex to form the active translocon.

The protein resides in the cell inner membrane. Functionally, part of the twin-arginine translocation (Tat) system that transports large folded proteins containing a characteristic twin-arginine motif in their signal peptide across membranes. Together with TatC, TatB is part of a receptor directly interacting with Tat signal peptides. TatB may form an oligomeric binding site that transiently accommodates folded Tat precursor proteins before their translocation. The sequence is that of Sec-independent protein translocase protein TatB from Saccharophagus degradans (strain 2-40 / ATCC 43961 / DSM 17024).